The sequence spans 337 residues: MIQKNWQELIKPNKIEFHAHSNPNVLSVVAEPLERGFGLTLGNALRRILLSSLRGAAITAVQVEGVLHEFSSIPGVREDVADIILNIKEIAIRMEEEGPKRIVVCKEGPGIVKAGDIRTVGDMEILNPEHVICTLDEGAEIRMEFIVNTGKGYVPSDRNCFDDAPIGLIPIDSLYSPINKVSYKVENTREGQVLDYDKLTLTIETNGAVNGKDAVAFAARILQDQLSVFVNFKEPQKELVEEQTSELSFNPALLKKVDELELSVRSANCLKNDNIVYIGDLIQKTESEMLRTPNFGRKSLNEIKEVLACMGLHLGMEISAWPPENIDDLAKHYEDQY.

Residues 1–233 (MIQKNWQELI…DQLSVFVNFK (233 aa)) are alpha N-terminal domain (alpha-NTD). The tract at residues 249-337 (FNPALLKKVD…DLAKHYEDQY (89 aa)) is alpha C-terminal domain (alpha-CTD).

This sequence belongs to the RNA polymerase alpha chain family. In terms of assembly, homodimer. The RNAP catalytic core consists of 2 alpha, 1 beta, 1 beta' and 1 omega subunit. When a sigma factor is associated with the core the holoenzyme is formed, which can initiate transcription.

It catalyses the reaction RNA(n) + a ribonucleoside 5'-triphosphate = RNA(n+1) + diphosphate. Its function is as follows. DNA-dependent RNA polymerase catalyzes the transcription of DNA into RNA using the four ribonucleoside triphosphates as substrates. The polypeptide is DNA-directed RNA polymerase subunit alpha (Bartonella bacilliformis (strain ATCC 35685 / KC583 / Herrer 020/F12,63)).